We begin with the raw amino-acid sequence, 802 residues long: LPS-assembly protein LptD (802 aa).

Residues 1–25 form the signal peptide; the sequence is MARLFSLKPLVLALGLCFGTHCAAA.

This sequence belongs to the LptD family. In terms of assembly, component of the lipopolysaccharide transport and assembly complex. Interacts with LptE and LptA.

The protein resides in the cell outer membrane. In terms of biological role, together with LptE, is involved in the assembly of lipopolysaccharide (LPS) at the surface of the outer membrane. This chain is LPS-assembly protein LptD, found in Neisseria meningitidis serogroup B (strain ATCC BAA-335 / MC58).